Consider the following 66-residue polypeptide: Large ribosomal subunit protein bL35 (66 aa).

The segment covering 18–27 (ATGKIKSTQS) has biased composition (polar residues). The interval 18–41 (ATGKIKSTQSAKRHGMTKRSKRSI) is disordered. Positions 28 to 41 (AKRHGMTKRSKRSI) are enriched in basic residues.

It belongs to the bacterial ribosomal protein bL35 family.

In Ehrlichia ruminantium (strain Gardel), this protein is Large ribosomal subunit protein bL35.